The following is a 203-amino-acid chain: RNA chaperone ProQ (203 aa).

Residues 111-138 form a disordered region; sequence KAKRQALAPKKPAKKVAPKRAPAVKKER.

It belongs to the ProQ family.

It localises to the cytoplasm. Its function is as follows. RNA chaperone with significant RNA binding, RNA strand exchange and RNA duplexing activities. The polypeptide is RNA chaperone ProQ (Shewanella frigidimarina (strain NCIMB 400)).